Here is an 884-residue protein sequence, read N- to C-terminus: Bifunctional heparan sulfate N-deacetylase/N-sulfotransferase 2 (884 aa).

Residues 1–18 (MLKLWKVVRPARQLELHR) are Cytoplasmic-facing. Residues 19–39 (LILLLIAFSLGSMGFLAYYVS) traverse the membrane as a helical; Signal-anchor for type II membrane protein segment. Over 40–884 (TSPKAKEPLP…REELQHSSSG (845 aa)) the chain is Lumenal. A heparan sulfate N-deacetylase 2 region spans residues 41-598 (SPKAKEPLPL…KRHKDIWSKE (558 aa)). A disordered region spans residues 49–82 (PLPLGDCSSSGAAGGPGPVRPPVPPRPPRPPETA). Positions 66 to 79 (PVRPPVPPRPPRPP) are enriched in pro residues. Asn351 and Asn401 each carry an N-linked (GlcNAc...) asparagine glycan. The interval 599 to 884 (KTCDRLPKFL…REELQHSSSG (286 aa)) is heparan sulfate N-sulfotransferase 2. Catalysis depends on Lys614, which acts as the For sulfotransferase activity. Residue 614–618 (KTGTT) participates in 3'-phosphoadenylyl sulfate binding. The N-linked (GlcNAc...) asparagine glycan is linked to Asn667. Ser712 contacts 3'-phosphoadenylyl sulfate. N-linked (GlcNAc...) asparagine glycans are attached at residues Asn727 and Asn803. A disulfide bond links Cys818 and Cys828. 833–837 (KGRKY) contacts 3'-phosphoadenylyl sulfate.

The protein belongs to the sulfotransferase 1 family. NDST subfamily. In terms of assembly, monomer.

The protein resides in the golgi apparatus membrane. It catalyses the reaction alpha-D-glucosaminyl-[heparan sulfate](n) + 3'-phosphoadenylyl sulfate = N-sulfo-alpha-D-glucosaminyl-[heparan sulfate](n) + adenosine 3',5'-bisphosphate + 2 H(+). It participates in glycan metabolism; heparan sulfate biosynthesis. The protein operates within glycan metabolism; heparin biosynthesis. In terms of biological role, essential bifunctional enzyme that catalyzes both the N-deacetylation and the N-sulfation of glucosamine (GlcNAc) of the glycosaminoglycan in heparan sulfate. Modifies the GlcNAc-GlcA disaccharide repeating sugar backbone to make N-sulfated heparosan, a prerequisite substrate for later modifications in heparin biosynthesis. Plays a role in determining the extent and pattern of sulfation of heparan sulfate. Required for the exosomal release of SDCBP, CD63 and syndecan. The chain is Bifunctional heparan sulfate N-deacetylase/N-sulfotransferase 2 (NDST2) from Bos taurus (Bovine).